We begin with the raw amino-acid sequence, 908 residues long: 5'-3' exoribonuclease 2 homolog (908 aa).

The CCHC-type zinc-finger motif lies at Arg263–Gly280. Disordered regions lie at residues Arg409–Tyr457 and Gly821–Phe908. A compositionally biased stretch (polar residues) spans His432–Val454. Ser438 bears the Phosphoserine mark. Composition is skewed to low complexity over residues Gly825–Arg868 and Gln878–Phe908.

Belongs to the 5'-3' exonuclease family. XRN2/RAT1 subfamily. As to quaternary structure, interacts with cuff and Rai1; the interaction with cuff may inhibit its role in RNA degradation.

Its subcellular location is the nucleus. In terms of biological role, a 5'-3' exoribonuclease. May promote the termination of transcription by RNA polymerase II and promote RNA degradation. Involved in turnover of piRNA precursors. This chain is 5'-3' exoribonuclease 2 homolog, found in Drosophila melanogaster (Fruit fly).